A 252-amino-acid chain; its full sequence is MSVISMKQLLEAGVHFGHQTRRWNPKMAEYIFTERNGIYIIDLQKTVKKVEEAYYFLREVAMNGQGVLFVGTKKQAQDSIREEAQRADQYYVNARWLGGMLTNFKTIKGRINRLKELTKMEEEGVFDVLPKKEVTKLRAEKEKLEKYLGGIKEMKELPGALFVVDPRKERIAVLEARRLGIPVVAIVDTNCDPDEVDYVIPGNDDAIRAVKLIASKMADAIIEGRQGEQLSVESTAQEQVEETAQEETAVEA.

Residues 231–252 form a disordered region; that stretch reads SVESTAQEQVEETAQEETAVEA. The span at 239–252 shows a compositional bias: acidic residues; that stretch reads QVEETAQEETAVEA.

It belongs to the universal ribosomal protein uS2 family.

The sequence is that of Small ribosomal subunit protein uS2 from Acetivibrio thermocellus (strain ATCC 27405 / DSM 1237 / JCM 9322 / NBRC 103400 / NCIMB 10682 / NRRL B-4536 / VPI 7372) (Clostridium thermocellum).